A 110-amino-acid polypeptide reads, in one-letter code: Large ribosomal subunit protein uL22 (110 aa).

It belongs to the universal ribosomal protein uL22 family. In terms of assembly, part of the 50S ribosomal subunit.

This protein binds specifically to 23S rRNA; its binding is stimulated by other ribosomal proteins, e.g. L4, L17, and L20. It is important during the early stages of 50S assembly. It makes multiple contacts with different domains of the 23S rRNA in the assembled 50S subunit and ribosome. Functionally, the globular domain of the protein is located near the polypeptide exit tunnel on the outside of the subunit, while an extended beta-hairpin is found that lines the wall of the exit tunnel in the center of the 70S ribosome. This Paraburkholderia phytofirmans (strain DSM 17436 / LMG 22146 / PsJN) (Burkholderia phytofirmans) protein is Large ribosomal subunit protein uL22.